Consider the following 135-residue polypeptide: Large ribosomal subunit protein uL16 (135 aa).

The protein belongs to the universal ribosomal protein uL16 family. As to quaternary structure, part of the 50S ribosomal subunit.

Its function is as follows. Binds 23S rRNA and is also seen to make contacts with the A and possibly P site tRNAs. This chain is Large ribosomal subunit protein uL16, found in Bdellovibrio bacteriovorus (strain ATCC 15356 / DSM 50701 / NCIMB 9529 / HD100).